The sequence spans 40 residues: Sarcotoxin-1D (40 aa).

It belongs to the cecropin family.

The protein resides in the secreted. Its function is as follows. Sarcotoxins, which are potent bactericidal proteins, are produced in response to injury. They are cytotoxic to both Gram-positive and Gram-negative bacteria. The chain is Sarcotoxin-1D from Sarcophaga peregrina (Flesh fly).